Consider the following 456-residue polypeptide: Putative dihydroorotase (456 aa).

The protein belongs to the metallo-dependent hydrolases superfamily. DHOase family. Class I DHOase subfamily.

The enzyme catalyses (S)-dihydroorotate + H2O = N-carbamoyl-L-aspartate + H(+). The protein operates within pyrimidine metabolism; UMP biosynthesis via de novo pathway; (S)-dihydroorotate from bicarbonate: step 3/3. In terms of biological role, catalyzes the reversible cyclization of carbamoyl aspartate to dihydroorotate. The sequence is that of Putative dihydroorotase from Rhodopirellula baltica (strain DSM 10527 / NCIMB 13988 / SH1).